A 310-amino-acid chain; its full sequence is MKRPHDYSSPDSDTDELIDVGQEDSYCPVTGSMSPGSTSQILARKKRRGIIEKRRRDRINHSLSELRRLVPSAFEKQGSSKLEKAEILQMTVDHLKLLHAMGGKGYFDARALAVDYRTLGFRECVGEVVRYLSSLEGVESSDPIGARLVSHLSHCASELDPLLQSPAALPFPPWPWASFPQLQAASPPASSTPFPPNARRDLAPHGTATILGYPSPALRMGSLSTQGTILNPALTSVRQLPSVPGHLHRLQQHSPEGRTVPSSSSSSSNSSPPQISFRPFVPAGSPAGGRRALSSSSKSAQAWGTEIGAF.

A disordered region spans residues 1-21; sequence MKRPHDYSSPDSDTDELIDVG. Residues 12–21 show a composition bias toward acidic residues; sequence SDTDELIDVG. The 56-residue stretch at 43–98 folds into the bHLH domain; sequence ARKKRRGIIEKRRRDRINHSLSELRRLVPSAFEKQGSSKLEKAEILQMTVDHLKLL. One can recognise an Orange domain in the interval 116–152; sequence YRTLGFRECVGEVVRYLSSLEGVESSDPIGARLVSHL. Low complexity-rich tracts occupy residues 182 to 192 and 261 to 273; these read LQAASPPASST and PSSS…SSPP. Disordered stretches follow at residues 182–208 and 248–310; these read LQAA…HGTA and HRLQ…IGAF. Positions 293-302 are enriched in polar residues; sequence LSSSSKSAQA.

Belongs to the HEY family.

The protein resides in the nucleus. In terms of biological role, transcriptional repressor which functions as a downstream effector of Notch signaling. The chain is Hairy/enhancer-of-split related with YRPW motif-like protein (heyl) from Danio rerio (Zebrafish).